We begin with the raw amino-acid sequence, 280 residues long: Protease HtpX (280 aa).

A run of 2 helical transmembrane segments spans residues 7–26 and 30–49; these read TFILLASLTALLVVIGGLLG and GMLIALVFAGVMNFSAYWYS. His129 contributes to the Zn(2+) binding site. The active site involves Glu130. His133 serves as a coordination point for Zn(2+). The next 2 membrane-spanning stretches (helical) occupy residues 146-166 and 178-198; these read ATIAGAISGIANMFMWLSMFG and VVGMIMMIVAPLAAGLIQMAI. Glu203 lines the Zn(2+) pocket.

The protein belongs to the peptidase M48B family. Zn(2+) is required as a cofactor.

It localises to the cell inner membrane. The chain is Protease HtpX from Legionella pneumophila subsp. pneumophila (strain Philadelphia 1 / ATCC 33152 / DSM 7513).